The chain runs to 705 residues: MCPLPHANLSMVTNEVTNFMSSLIAFQTYHLRHSFLSPSNMIPRSSNHKRSLSSGPRSLSPDRTVTKTKSTNDLAATATEKPSLATRSNSAGDIPDSGFSTLRDPRLVNNSEASDTSSTPSHHPDLSSEVAALSVKLIQAINNQTTLDDNLVATRQELEQAQNRIKSLESENEKYRHDIEQAVLIKKADADREISQLKAALAEEKAQRAIVEKSKKTIEQELETLTAALFEEANKMVAAAKLEREAVEKKNEQLRAQVKDTELLLASHQEQLAELKSVMQGMNIAKDDVEVRTTISTVPSSPDGHQQLPGIFPRSLETADPPEQSPHVEEIVPGPSTSFPHLFKSVCRTDIQAFEDFRELFSLSSASKPPSRAASGSYAGLNVMSLANFSSAGFGSASSSPAKSTHSPNGSMSSPQPATSHIPLKETRFYKRVLMEDIEPTLRLDAAPGISWLTRRAVLSSICEGSLVVEPIPPATRKYGFPCSLCGDRRPGSANERTHRFRTSDSDTAQRYPLCVLCLEKVRSSCEFTGYLRLILDGHVRAADAEEEKDAWEETVRLRERMFWSRIGGGVVPTFAQANSFENAGSAPSRHNLGDRIGDDEQDRLDAPLETYETPNHGHDHGVSDSDYDNASVSGYTSASGVSRPFYGSPKSHASEKGKDEYLEHGVSQVTLSATSDDPKSITHVEESLVIRTAKNDDGHDDDQN.

A coiled-coil region spans residues 144–285 (QTTLDDNLVA…KSVMQGMNIA (142 aa)).

It belongs to the SEC2 family.

In terms of biological role, guanine nucleotide exchange factor that plays an important role in regulating the growth and virulence, probably by regulating the autophagy pathway. Affects the sensitivity to cell wall disruptors and the cell wall thickness by regulating the expression levels of the cell wall integrity (CWI) pathway genes, thus coordinating the growth and virulence. Positively regulates the autophagy pathway to enhance the expression of CWI pathway genes in the presence of autophagy inducers. The polypeptide is Rab guanine nucleotide exchange factor sec2 (Aspergillus fumigatus (strain ATCC MYA-4609 / CBS 101355 / FGSC A1100 / Af293) (Neosartorya fumigata)).